A 300-amino-acid chain; its full sequence is LysM and putative peptidoglycan-binding domain-containing protein 3 (300 aa).

Topologically, residues 1 to 216 (MAGRNQNRTA…PYYGADWGMG (216 aa)) are extracellular. Residues Asn7 and Asn26 are each glycosylated (N-linked (GlcNAc...) asparagine). Residue Ser55 is modified to Phosphoserine. The LysM domain occupies 65–109 (LTKDIQEGDTLNAVALQYCCTVADIKRVNNLISDQDFFALRSIKI). A disordered region spans residues 136–157 (PYFQEQDTVPANDSPSSSESAG). A compositionally biased stretch (polar residues) spans 140-156 (EQDTVPANDSPSSSESA). Residue Asn199 is glycosylated (N-linked (GlcNAc...) asparagine). Residues 217-237 (WWTAVVIMLIVGIITPVFYLL) form a helical membrane-spanning segment. Residues 238-300 (YYEILAKVDV…LYRQDPQARD (63 aa)) lie on the Cytoplasmic side of the membrane. The tract at residues 253-300 (VDSSHLHPGLTPPSHHREMGNAIGPTKGIPVGQQDDHRLYRQDPQARD) is disordered. Positions 286 to 300 (QDDHRLYRQDPQARD) are enriched in basic and acidic residues.

The protein resides in the cell membrane. Its subcellular location is the golgi apparatus. Functionally, essential for Golgi structural integrity. This Rattus norvegicus (Rat) protein is LysM and putative peptidoglycan-binding domain-containing protein 3 (Lysmd3).